A 273-amino-acid polypeptide reads, in one-letter code: Rhamnulose-1-phosphate aldolase (273 aa).

E117 is a catalytic residue. Positions 140, 142, and 211 each coordinate Zn(2+).

It belongs to the aldolase class II family. RhaD subfamily. Requires Zn(2+) as cofactor.

It localises to the cytoplasm. It catalyses the reaction L-rhamnulose 1-phosphate = (S)-lactaldehyde + dihydroxyacetone phosphate. The protein operates within carbohydrate degradation; L-rhamnose degradation; glycerone phosphate from L-rhamnose: step 3/3. In terms of biological role, catalyzes the reversible cleavage of L-rhamnulose-1-phosphate to dihydroxyacetone phosphate (DHAP) and L-lactaldehyde. This chain is Rhamnulose-1-phosphate aldolase, found in Listeria monocytogenes serotype 4b (strain CLIP80459).